The following is a 527-amino-acid chain: Pentatricopeptide repeat-containing protein At5g41170, mitochondrial (527 aa).

The transit peptide at 1–35 directs the protein to the mitochondrion; that stretch reads MAMRFFQLHRNRLVKGNSGKALSFSRLLDLSFWVR. PPR repeat units follow at residues 36–70, 71–105, 106–140, 141–175, 176–210, 211–245, 246–280, 281–315, 316–350, 351–385, 386–420, 424–458, 459–493, and 494–527; these read AFCNYREILRNGLHSLQFNEALDLFTHMVESRPLP, SIIDFTKLLNVIAKMKKFDVVINLCDHLQIMGVSH, DLYTCNLLMNCFCQSSQPYLASSFLGKMMKLGFEP, DIVTFTSLINGFCLGNRMEEAMSMVNQMVEMGIKP, DVVMYTTIIDSLCKNGHVNYALSLFDQMENYGIRP, DVVMYTSLVNGLCNSGRWRDADSLLRGMTKRKIKP, DVITFNALIDAFVKEGKFLDAEELYNEMIRMSIAP, NIFTYTSLINGFCMEGCVDEARQMFYLMETKGCFP, DVVAYTSLINGFCKCKKVDDAMKIFYEMSQKGLTG, NTITYTTLIQGFGQVGKPNVAQEVFSHMVSRGVPP, NIRTYNVLLHCLCYNGKVKKALMIFEDMQKREMDG, NIWTYNVLLHGLCYNGKLEKALMVFEDMRKREMDI, GIITYTIIIQGMCKAGKVKNAVNLFCSLPSKGVKP, and NVVTYTTMISGLFREGLKHEAHVLFRKMKEDGVS.

The protein belongs to the PPR family. P subfamily.

The protein resides in the mitochondrion. The protein is Pentatricopeptide repeat-containing protein At5g41170, mitochondrial of Arabidopsis thaliana (Mouse-ear cress).